A 1075-amino-acid polypeptide reads, in one-letter code: Putative type I restriction enzyme MjaVIIP endonuclease subunit (1075 aa).

The protein belongs to the HsdR family. As to quaternary structure, the type I restriction/modification system is composed of three polypeptides R, M and S.

It carries out the reaction Endonucleolytic cleavage of DNA to give random double-stranded fragments with terminal 5'-phosphates, ATP is simultaneously hydrolyzed.. The restriction (R) subunit of a type I restriction enzyme that recognizes 5'-CAAN(7)TGG-3' and cleaves a random distance away. The R subunit is required for both endonuclease and ATPase activities but not for modification. After locating a non-methylated recognition site, the enzyme complex serves as a molecular motor that translocates DNA in an ATP-dependent manner until a collision occurs that triggers cleavage. This Methanocaldococcus jannaschii (strain ATCC 43067 / DSM 2661 / JAL-1 / JCM 10045 / NBRC 100440) (Methanococcus jannaschii) protein is Putative type I restriction enzyme MjaVIIP endonuclease subunit.